We begin with the raw amino-acid sequence, 310 residues long: Ribosomal RNA small subunit methyltransferase H (310 aa).

Residues 32 to 34 (GGH), aspartate 52, phenylalanine 79, aspartate 100, and glutamine 107 each bind S-adenosyl-L-methionine.

It belongs to the methyltransferase superfamily. RsmH family.

It localises to the cytoplasm. The enzyme catalyses cytidine(1402) in 16S rRNA + S-adenosyl-L-methionine = N(4)-methylcytidine(1402) in 16S rRNA + S-adenosyl-L-homocysteine + H(+). Its function is as follows. Specifically methylates the N4 position of cytidine in position 1402 (C1402) of 16S rRNA. The chain is Ribosomal RNA small subunit methyltransferase H from Bacillus anthracis (strain A0248).